The primary structure comprises 75 residues: Small ribosomal subunit protein bS18 (75 aa).

Belongs to the bacterial ribosomal protein bS18 family. Part of the 30S ribosomal subunit. Forms a tight heterodimer with protein bS6.

Binds as a heterodimer with protein bS6 to the central domain of the 16S rRNA, where it helps stabilize the platform of the 30S subunit. The sequence is that of Small ribosomal subunit protein bS18 from Aliivibrio fischeri (strain ATCC 700601 / ES114) (Vibrio fischeri).